Reading from the N-terminus, the 249-residue chain is Formylaminopyrimidine import ATP-binding protein ThiZ (249 aa).

Residues 6–228 (LTFEEVSFAY…RRKMETTEKM (223 aa)) enclose the ABC transporter domain. 39 to 46 (AKSGSGKS) contributes to the ATP binding site.

The protein belongs to the ABC transporter superfamily. In terms of assembly, the complex is likely composed of an ATP-binding protein (ThiZ), a transmembrane protein (ThiX) and a solute-binding protein (ThiY).

It is found in the cell membrane. The protein operates within cofactor biosynthesis; thiamine diphosphate biosynthesis. Participates in a thiamine pyrimidine salvage pathway as part of the ABC transporter complex ThiXYZ involved in the import of thiamine degradation products such as the formylaminopyrimidine N-formyl-4-amino-5-aminomethyl-2-methylpyrimidine (FAMP). Is likely responsible for energy coupling to the transport system. The polypeptide is Formylaminopyrimidine import ATP-binding protein ThiZ (Halalkalibacterium halodurans (strain ATCC BAA-125 / DSM 18197 / FERM 7344 / JCM 9153 / C-125) (Bacillus halodurans)).